We begin with the raw amino-acid sequence, 291 residues long: Pirin-like protein (291 aa).

The protein belongs to the pirin family.

Its subcellular location is the nucleus. The protein is Pirin-like protein of Solanum lycopersicum (Tomato).